We begin with the raw amino-acid sequence, 218 residues long: Pyridoxine/pyridoxamine 5'-phosphate oxidase (218 aa).

Substrate contacts are provided by residues 12–15 (RLSY) and Arg-70. Residues 65–70 (RTVLLR), 80–81 (YT), Lys-87, and Gln-109 contribute to the FMN site. Positions 127, 131, and 135 each coordinate substrate. Residues 145 to 146 (QS) and Trp-191 contribute to the FMN site. 197–199 (RLH) is a binding site for substrate. Arg-201 is an FMN binding site.

It belongs to the pyridoxamine 5'-phosphate oxidase family. As to quaternary structure, homodimer. The cofactor is FMN.

It catalyses the reaction pyridoxamine 5'-phosphate + O2 + H2O = pyridoxal 5'-phosphate + H2O2 + NH4(+). The catalysed reaction is pyridoxine 5'-phosphate + O2 = pyridoxal 5'-phosphate + H2O2. It functions in the pathway cofactor metabolism; pyridoxal 5'-phosphate salvage; pyridoxal 5'-phosphate from pyridoxamine 5'-phosphate: step 1/1. The protein operates within cofactor metabolism; pyridoxal 5'-phosphate salvage; pyridoxal 5'-phosphate from pyridoxine 5'-phosphate: step 1/1. Its function is as follows. Catalyzes the oxidation of either pyridoxine 5'-phosphate (PNP) or pyridoxamine 5'-phosphate (PMP) into pyridoxal 5'-phosphate (PLP). This is Pyridoxine/pyridoxamine 5'-phosphate oxidase from Acinetobacter baumannii (strain SDF).